Here is a 158-residue protein sequence, read N- to C-terminus: SsrA-binding protein (158 aa).

A disordered region spans residues 131-158 (GKKTHDKRETEKKRDWNREKARLLRDRG). Residues 136–158 (DKRETEKKRDWNREKARLLRDRG) are compositionally biased toward basic and acidic residues.

Belongs to the SmpB family.

Its subcellular location is the cytoplasm. Its function is as follows. Required for rescue of stalled ribosomes mediated by trans-translation. Binds to transfer-messenger RNA (tmRNA), required for stable association of tmRNA with ribosomes. tmRNA and SmpB together mimic tRNA shape, replacing the anticodon stem-loop with SmpB. tmRNA is encoded by the ssrA gene; the 2 termini fold to resemble tRNA(Ala) and it encodes a 'tag peptide', a short internal open reading frame. During trans-translation Ala-aminoacylated tmRNA acts like a tRNA, entering the A-site of stalled ribosomes, displacing the stalled mRNA. The ribosome then switches to translate the ORF on the tmRNA; the nascent peptide is terminated with the 'tag peptide' encoded by the tmRNA and targeted for degradation. The ribosome is freed to recommence translation, which seems to be the essential function of trans-translation. The sequence is that of SsrA-binding protein from Brucella abortus biovar 1 (strain 9-941).